The sequence spans 275 residues: Large ribosomal subunit protein uL2 (275 aa).

Positions 224–275 are disordered; the sequence is AMNPVDHPHGGGEAKAGQGNPHPVTPWGVPTKGYKTRKNKRTQQFIVRDRRG.

This sequence belongs to the universal ribosomal protein uL2 family. In terms of assembly, part of the 50S ribosomal subunit. Forms a bridge to the 30S subunit in the 70S ribosome.

Its function is as follows. One of the primary rRNA binding proteins. Required for association of the 30S and 50S subunits to form the 70S ribosome, for tRNA binding and peptide bond formation. It has been suggested to have peptidyltransferase activity; this is somewhat controversial. Makes several contacts with the 16S rRNA in the 70S ribosome. This chain is Large ribosomal subunit protein uL2, found in Xanthomonas oryzae pv. oryzae (strain MAFF 311018).